The chain runs to 971 residues: Sodium/calcium exchanger 1 (971 aa).

Positions 1 to 32 (MLRLSLPPNVSMGFRLVTLVALLFTHVDHITA) are cleaved as a signal peptide. Residues 33–71 (DTEAETGGNETTECTGSYYCKKGVILPIWEPQDPSFGDK) are Extracellular-facing. Asn41 carries an N-linked (GlcNAc...) asparagine glycan. A helical membrane pass occupies residues 72–92 (IARATVYFVAMVYMFLGVSII). The Cytoplasmic segment spans residues 93-133 (ADRFMSSIEVITSQEKEITIKKPNGETTKTTVRIWNETVSN). A helical transmembrane segment spans residues 134–154 (LTLMALGSSAPEILLSVIEVC). The stretch at 138–178 (ALGSSAPEILLSVIEVCGHNFTAGDLGPSTIVGSAAFNMFI) is one Alpha-1 repeat. The Extracellular portion of the chain corresponds to 155–167 (GHNFTAGDLGPST). A glycan (N-linked (GlcNAc...) asparagine) is linked at Asn157. Residues 168 to 188 (IVGSAAFNMFIIIALCVYVVP) traverse the membrane as a helical segment. Over 189-201 (DGETRKIKHLRVF) the chain is Cytoplasmic. Residues 202–222 (FVTAAWSIFAYTWLYIILSVS) traverse the membrane as a helical segment. The Extracellular portion of the chain corresponds to 223 to 228 (SPGVVE). Residues 229-249 (VWEGLLTFFFFPICVVFAWVA) form a helical membrane-spanning segment. Topologically, residues 250 to 798 (DRRLLFYKYV…FVPPTEYWNG (549 aa)) are cytoplasmic. A putative calmodulin-binding region region spans residues 251 to 270 (RRLLFYKYVYKRYRAGKQRG). Phosphoserine occurs at positions 282 and 389. Calx-beta domains are found at residues 393 to 493 (VNMD…VHLS) and 524 to 624 (ATIT…IEIG). Residues Glu417, Asp453, Asp478, Asp479, Ile481, Glu483, Glu486, Asp530, Asp531, Asp532, Glu548, Asp584, Asp610, Glu611, Glu612, and Glu716 each coordinate Ca(2+). A helical membrane pass occupies residues 799–819 (WACFIVSILMIGLLTAFIGDL). At 820 to 822 (ASH) the chain is on the extracellular side. The helical transmembrane segment at 823-843 (FGCTIGLKDSVTAVVFVALGT) threads the bilayer. An Alpha-2 repeat occupies 840–876 (ALGTSVPDTFASKVAATQDQYADASIGNVTGSNAVNV). At 844-872 (SVPDTFASKVAATQDQYADASIGNVTGSN) the chain is on the cytoplasmic side. A helical membrane pass occupies residues 873 to 893 (AVNVFLGIGVAWSIAAIYHAA). Residues 894–904 (NGEQFKVSPGT) are Extracellular-facing. Residues 905–925 (LAFSVTLFTIFAFINVGVLLY) traverse the membrane as a helical segment. Residues 926 to 942 (RRRPEIGGELGGPRTAK) are Cytoplasmic-facing. Residues 943–963 (LLTSSLFVLLWLLYIFFSSLE) form a helical membrane-spanning segment. Residues 964 to 971 (AYCHIKGF) are Extracellular-facing.

The protein belongs to the Ca(2+):cation antiporter (CaCA) (TC 2.A.19) family. SLC8 subfamily. In terms of tissue distribution, detected in heart, brain cortex and hippocampus (at protein level). Cardiac sarcolemma or brain, and spleen. Expressed in all regions of the kidney, highest levels of expression in the distal convoluted tubule. Expressed throughout the CNS, in decreasing order of abundance in hippocampus, cortex, cerebellum, hypothalamus, midbrain and striatum. Expressed in numerous regions of the brain including multiple cortical layers, hippocampus, septal nuclei, thalamic nuclei, cerebellum, hypothalamus, olfactory bulb and brainstem. Also expressed in various regions of the spinal cord, ventricles and atria of the heart, lung, adrenals and kidney. Isoform 4 seems to be a predominant isoform in aorta, stomach, liver, and kidney.

It is found in the cell membrane. Its subcellular location is the cell projection. It localises to the dendrite. It catalyses the reaction Ca(2+)(in) + 3 Na(+)(out) = Ca(2+)(out) + 3 Na(+)(in). Activated by micromolar levels of Ca(2+). With respect to regulation, only active at low calcium concentrations. Not activated by PKC. Its activity is regulated as follows. Active at all calcium levels tested. Activated by PKC. Only active at low calcium concentrations. Activated by PKC. Its function is as follows. Mediates the exchange of one Ca(2+) ion against three to four Na(+) ions across the cell membrane, and thereby contributes to the regulation of cytoplasmic Ca(2+) levels and Ca(2+)-dependent cellular processes. Contributes to Ca(2+) transport during excitation-contraction coupling in muscle. In a first phase, voltage-gated channels mediate the rapid increase of cytoplasmic Ca(2+) levels due to release of Ca(2+) stores from the endoplasmic reticulum. SLC8A1 mediates the export of Ca(2+) from the cell during the next phase, so that cytoplasmic Ca(2+) levels rapidly return to baseline. Required for normal embryonic heart development and the onset of heart contractions. The chain is Sodium/calcium exchanger 1 (Slc8a1) from Rattus norvegicus (Rat).